Consider the following 197-residue polypeptide: Imidazoleglycerol-phosphate dehydratase (197 aa).

Belongs to the imidazoleglycerol-phosphate dehydratase family.

It is found in the cytoplasm. It carries out the reaction D-erythro-1-(imidazol-4-yl)glycerol 3-phosphate = 3-(imidazol-4-yl)-2-oxopropyl phosphate + H2O. The protein operates within amino-acid biosynthesis; L-histidine biosynthesis; L-histidine from 5-phospho-alpha-D-ribose 1-diphosphate: step 6/9. This chain is Imidazoleglycerol-phosphate dehydratase, found in Azotobacter vinelandii (strain DJ / ATCC BAA-1303).